We begin with the raw amino-acid sequence, 148 residues long: Translation initiation factor 2 subunit beta (148 aa).

It belongs to the eIF-2-beta/eIF-5 family. As to quaternary structure, heterotrimer composed of an alpha, a beta and a gamma chain.

In terms of biological role, eIF-2 functions in the early steps of protein synthesis by forming a ternary complex with GTP and initiator tRNA. The sequence is that of Translation initiation factor 2 subunit beta (eif2b) from Aeropyrum pernix (strain ATCC 700893 / DSM 11879 / JCM 9820 / NBRC 100138 / K1).